A 634-amino-acid chain; its full sequence is Alpha-L-iduronidase (634 aa).

Positions 1–16 (MLTFFAAFLAAPLALA) are cleaved as a signal peptide. Residues proline 44, leucine 46, and histidine 48 each coordinate alpha-D-mannopyranose. Histidine 81 is an alpha-L-iduronate binding site. N-linked (GlcNAc...) asparagine glycosylation occurs at asparagine 100. Alpha-L-iduronate contacts are provided by asparagine 171 and glutamate 172. The Proton donor role is filled by glutamate 172. N-linked (GlcNAc...) asparagine glycans are attached at residues asparagine 180 and asparagine 233. 3 residues coordinate alpha-L-iduronate: lysine 254, glutamate 289, and glycine 295. Glutamate 289 (nucleophile) is an active-site residue. Tryptophan 296 is an alpha-D-mannopyranose binding site. Residue asparagine 326 is glycosylated (N-linked (GlcNAc...) asparagine). Residues aspartate 339 and arginine 353 each contribute to the alpha-L-iduronate site. N-linked (GlcNAc...) asparagine glycans are attached at residues asparagine 362, asparagine 405, and asparagine 441. Residues cysteine 531 and cysteine 567 are joined by a disulfide bond.

Belongs to the glycosyl hydrolase 39 family. As to quaternary structure, monomer. Post-translationally, N-glycosylation contributes to substrate binding and is required for full enzymatic activity. In terms of tissue distribution, ubiquitous.

It is found in the lysosome. The enzyme catalyses Hydrolysis of unsulfated alpha-L-iduronosidic linkages in dermatan sulfate.. The polypeptide is Alpha-L-iduronidase (Idua) (Mus musculus (Mouse)).